Reading from the N-terminus, the 88-residue chain is Small ribosomal subunit protein bS20 (88 aa).

The protein belongs to the bacterial ribosomal protein bS20 family.

In terms of biological role, binds directly to 16S ribosomal RNA. This is Small ribosomal subunit protein bS20 from Oenococcus oeni (strain ATCC BAA-331 / PSU-1).